The sequence spans 386 residues: Cytochrome b (386 aa).

4 helical membrane-spanning segments follow: residues 32 to 52 (FGSL…TLAM), 76 to 98 (WLIR…LHVG), 113 to 133 (TWII…LGYV), and 179 to 199 (FFAL…MHLI). 2 residues coordinate heme b: H82 and H96. Residues H183 and H197 each contribute to the heme b site. H202 contributes to the a ubiquinone binding site. Helical transmembrane passes span 226 to 246 (YIFK…LFVF), 290 to 310 (LLGV…PITD), 322 to 342 (LSKV…QLGA), and 349 to 369 (FIEF…VIMP).

It belongs to the cytochrome b family. In terms of assembly, fungal cytochrome b-c1 complex contains 10 subunits; 3 respiratory subunits, 2 core proteins and 5 low-molecular weight proteins. Cytochrome b-c1 complex is a homodimer. Requires heme b as cofactor.

The protein resides in the mitochondrion inner membrane. Component of the ubiquinol-cytochrome c reductase complex (complex III or cytochrome b-c1 complex) that is part of the mitochondrial respiratory chain. The b-c1 complex mediates electron transfer from ubiquinol to cytochrome c. Contributes to the generation of a proton gradient across the mitochondrial membrane that is then used for ATP synthesis. In Talaromyces marneffei (Penicillium marneffei), this protein is Cytochrome b (cob).